Reading from the N-terminus, the 354-residue chain is uncharacterized protein (354 aa).

A signal peptide spans 1-21 (MFQKKTYAVFLILLLMMFTAA). Residue cysteine 22 is the site of N-palmitoyl cysteine attachment. Cysteine 22 carries the S-diacylglycerol cysteine lipid modification.

Its subcellular location is the cell membrane. It is found in the membrane raft. This is an uncharacterized protein from Bacillus subtilis (strain 168).